The primary structure comprises 287 residues: MSWLEKILPKSKITTPRRHNIPEGVWTKCSACEQVLYRAELERNLEVCPKCDHHMRISARARLESFLDEQGRTEIGAELEPQDVLKFKDSKRYKDRLSAAQKETGEKDALVVMKGTLKGVPVVACSFEFSFIGGSMSSVVGARFVRAVEESIKEGRGLVCFSTSGGARMQEALFSLMQMAKTSAALDRLSKAGLPYISVLTDPTMGGVSASLAMLGDINVGEPKALIGFAGPRVIEQTVREKLPEGFQRSEFLLEKGAIDLIIDRREMRNRLASLLAKMLNTHVIEE.

The CoA carboxyltransferase N-terminal domain occupies 25 to 287; it reads VWTKCSACEQ…KMLNTHVIEE (263 aa). The Zn(2+) site is built by C29, C32, C48, and C51. A C4-type zinc finger spans residues 29–51; sequence CSACEQVLYRAELERNLEVCPKC.

Belongs to the AccD/PCCB family. In terms of assembly, acetyl-CoA carboxylase is a heterohexamer composed of biotin carboxyl carrier protein (AccB), biotin carboxylase (AccC) and two subunits each of ACCase subunit alpha (AccA) and ACCase subunit beta (AccD). Zn(2+) serves as cofactor.

It is found in the cytoplasm. The enzyme catalyses N(6)-carboxybiotinyl-L-lysyl-[protein] + acetyl-CoA = N(6)-biotinyl-L-lysyl-[protein] + malonyl-CoA. Its pathway is lipid metabolism; malonyl-CoA biosynthesis; malonyl-CoA from acetyl-CoA: step 1/1. In terms of biological role, component of the acetyl coenzyme A carboxylase (ACC) complex. Biotin carboxylase (BC) catalyzes the carboxylation of biotin on its carrier protein (BCCP) and then the CO(2) group is transferred by the transcarboxylase to acetyl-CoA to form malonyl-CoA. The polypeptide is Acetyl-coenzyme A carboxylase carboxyl transferase subunit beta (Aeromonas hydrophila subsp. hydrophila (strain ATCC 7966 / DSM 30187 / BCRC 13018 / CCUG 14551 / JCM 1027 / KCTC 2358 / NCIMB 9240 / NCTC 8049)).